The primary structure comprises 937 residues: Isoleucine--tRNA ligase (937 aa).

The 'HIGH' region signature appears at 58-68 (PYANGTLHLGH). Glutamate 561 contacts L-isoleucyl-5'-AMP. The short motif at 602–606 (KMSKS) is the 'KMSKS' region element. Lysine 605 contacts ATP. Cysteine 900, cysteine 903, cysteine 920, and cysteine 923 together coordinate Zn(2+).

This sequence belongs to the class-I aminoacyl-tRNA synthetase family. IleS type 1 subfamily. In terms of assembly, monomer. Zn(2+) is required as a cofactor.

It localises to the cytoplasm. The enzyme catalyses tRNA(Ile) + L-isoleucine + ATP = L-isoleucyl-tRNA(Ile) + AMP + diphosphate. In terms of biological role, catalyzes the attachment of isoleucine to tRNA(Ile). As IleRS can inadvertently accommodate and process structurally similar amino acids such as valine, to avoid such errors it has two additional distinct tRNA(Ile)-dependent editing activities. One activity is designated as 'pretransfer' editing and involves the hydrolysis of activated Val-AMP. The other activity is designated 'posttransfer' editing and involves deacylation of mischarged Val-tRNA(Ile). In Histophilus somni (strain 2336) (Haemophilus somnus), this protein is Isoleucine--tRNA ligase.